Reading from the N-terminus, the 1546-residue chain is DNA-directed RNA polymerase subunit beta' (1546 aa).

C57, C59, C72, and C75 together coordinate Zn(2+). Residues D756, D758, and D760 each coordinate Mg(2+). Positions 1130, 1211, 1218, and 1221 each coordinate Zn(2+). A disordered region spans residues 1512 to 1546; it reads LEKYGEGSTSSDAVTGGQRYDDTRPGSSINPGYGD. Polar residues predominate over residues 1536–1546; sequence PGSSINPGYGD.

It belongs to the RNA polymerase beta' chain family. The RNAP catalytic core consists of 2 alpha, 1 beta, 1 beta' and 1 omega subunit. When a sigma factor is associated with the core the holoenzyme is formed, which can initiate transcription. Requires Mg(2+) as cofactor. The cofactor is Zn(2+).

The catalysed reaction is RNA(n) + a ribonucleoside 5'-triphosphate = RNA(n+1) + diphosphate. DNA-dependent RNA polymerase catalyzes the transcription of DNA into RNA using the four ribonucleoside triphosphates as substrates. In Deinococcus radiodurans (strain ATCC 13939 / DSM 20539 / JCM 16871 / CCUG 27074 / LMG 4051 / NBRC 15346 / NCIMB 9279 / VKM B-1422 / R1), this protein is DNA-directed RNA polymerase subunit beta'.